The chain runs to 425 residues: ATP-dependent RNA helicase eIF4A (425 aa).

Residues 38–66 (DTWEDYGLKEDLLKGIYSIGFETPSFIQK) carry the Q motif motif. One can recognise a Helicase ATP-binding domain in the interval 69–241 (IQPIIDGRDI…EEILINPVII (173 aa)). 82–89 (AQSGTGKT) is an ATP binding site. The short motif at 187–190 (DEAD) is the DEAD box element. Residues 252–425 (GIRQYFIDLR…KELPADFSFQ (174 aa)) enclose the Helicase C-terminal domain.

The protein belongs to the DEAD box helicase family. eIF4A subfamily. As to quaternary structure, component of the eIF4F complex, which composition varies with external and internal environmental conditions. It is composed of at least eIF4A, eIF4E and eIF4G.

The protein localises to the cytoplasm. The enzyme catalyses ATP + H2O = ADP + phosphate + H(+). Functionally, ATP-dependent RNA helicase which is a subunit of the eIF4F complex involved in cap recognition and is required for mRNA binding to ribosome. In the current model of translation initiation, eIF4A unwinds RNA secondary structures in the 5'-UTR of mRNAs which is necessary to allow efficient binding of the small ribosomal subunit, and subsequent scanning for the initiator codon. In Encephalitozoon cuniculi (strain GB-M1) (Microsporidian parasite), this protein is ATP-dependent RNA helicase eIF4A (TIF1).